The chain runs to 142 residues: Transcriptional regulator MraZ (142 aa).

SpoVT-AbrB domains lie at 5-51 and 77-120; these read ASAL…PRPE and AADV…DAAT.

It belongs to the MraZ family. In terms of assembly, forms oligomers.

The protein resides in the cytoplasm. The protein localises to the nucleoid. This Cupriavidus pinatubonensis (strain JMP 134 / LMG 1197) (Cupriavidus necator (strain JMP 134)) protein is Transcriptional regulator MraZ.